Consider the following 30-residue polypeptide: GIPCGESCVFIPCISTVIGCSCKNKVCYRN.

The cyclopeptide (Gly-Asn) cross-link spans Gly1 to Asn30. 3 cysteine pairs are disulfide-bonded: Cys4–Cys20, Cys8–Cys22, and Cys13–Cys27.

In terms of processing, this is a cyclic peptide.

It localises to the secreted. In terms of biological role, probably participates in a plant defense mechanism. The chain is Cyclotide cter-Q from Clitoria ternatea (Butterfly pea).